The following is a 250-amino-acid chain: Ubiquinone/menaquinone biosynthesis C-methyltransferase UbiE (250 aa).

S-adenosyl-L-methionine-binding positions include Thr-73, Asp-94, Asn-122 to Ala-123, and Ser-139.

This sequence belongs to the class I-like SAM-binding methyltransferase superfamily. MenG/UbiE family.

The catalysed reaction is a 2-demethylmenaquinol + S-adenosyl-L-methionine = a menaquinol + S-adenosyl-L-homocysteine + H(+). It carries out the reaction a 2-methoxy-6-(all-trans-polyprenyl)benzene-1,4-diol + S-adenosyl-L-methionine = a 5-methoxy-2-methyl-3-(all-trans-polyprenyl)benzene-1,4-diol + S-adenosyl-L-homocysteine + H(+). The protein operates within quinol/quinone metabolism; menaquinone biosynthesis; menaquinol from 1,4-dihydroxy-2-naphthoate: step 2/2. Its pathway is cofactor biosynthesis; ubiquinone biosynthesis. Functionally, methyltransferase required for the conversion of demethylmenaquinol (DMKH2) to menaquinol (MKH2) and the conversion of 2-polyprenyl-6-methoxy-1,4-benzoquinol (DDMQH2) to 2-polyprenyl-3-methyl-6-methoxy-1,4-benzoquinol (DMQH2). In Francisella philomiragia subsp. philomiragia (strain ATCC 25017 / CCUG 19701 / FSC 153 / O#319-036), this protein is Ubiquinone/menaquinone biosynthesis C-methyltransferase UbiE.